The primary structure comprises 465 residues: Lactaldehyde dehydrogenase (465 aa).

G220–G225 is an NAD(+) binding site. Residues E240 and C274 contribute to the active site.

The protein belongs to the aldehyde dehydrogenase family. In terms of assembly, homotetramer.

It catalyses the reaction (S)-lactaldehyde + NAD(+) + H2O = (S)-lactate + NADH + 2 H(+). It functions in the pathway cofactor biosynthesis; coenzyme F420 biosynthesis. Functionally, involved in F420 biosynthesis through the oxidation of lactaldehyde to lactate. In Methanococcus aeolicus (strain ATCC BAA-1280 / DSM 17508 / OCM 812 / Nankai-3), this protein is Lactaldehyde dehydrogenase.